Here is a 163-residue protein sequence, read N- to C-terminus: uncharacterized protein (163 aa).

4Fe-4S ferredoxin-type domains lie at 30-59, 61-90, 105-136, and 136-163; these read REII…YSSD, LYIT…IIRL, KYEF…EYGS, and SKIR…IILR. Residues C39, C42, C45, C49, C70, C73, C76, C80, C116, C119, C122, C126, C145, C148, C151, and C155 each contribute to the [4Fe-4S] cluster site.

This is an uncharacterized protein from Methanocaldococcus jannaschii (strain ATCC 43067 / DSM 2661 / JAL-1 / JCM 10045 / NBRC 100440) (Methanococcus jannaschii).